The sequence spans 167 residues: Bacterial non-heme ferritin (167 aa).

One can recognise a Ferritin-like diiron domain in the interval 1–145; sequence MLSKDIIKLL…DILDKIELIG (145 aa). Fe cation contacts are provided by glutamate 17, glutamate 50, histidine 53, glutamate 94, and glutamine 127.

This sequence belongs to the ferritin family. Prokaryotic subfamily. As to quaternary structure, homooligomer of 24 subunits that assemble into a spherical protein shell (12 +/- 1 nM diameter) that can sequester at least 2000 iron atoms.

The protein localises to the cytoplasm. It carries out the reaction 4 Fe(2+) + O2 + 6 H2O = 4 iron(III) oxide-hydroxide + 12 H(+). Functionally, iron-storage protein. The sequence is that of Bacterial non-heme ferritin (ftnA) from Helicobacter pylori (strain ATCC 700392 / 26695) (Campylobacter pylori).